Consider the following 270-residue polypeptide: MLLNVLRICIIVCLVNDGAGKHSEGRERTKTYSLNSRGYFRKERGARRSKILLVNTKGLDEPHIGHGDFGLVAELFDSTRTHTNRKEPDMNKVKLFSTVAHGNKSARRKAYNGSRRNIFSRRSFDKRNTEVTEKPGAKMFWNNFLVKMNGAPQNTSHGSKAQEIMKEACKTLPFTQNIVHENCDRMVIQNNLCFGKCISLHVPNQQDRRNTCSHCLPSKFTLNHLTLNCTGSKNVVKVVMMVEECTCEAHKSNFHQTAQFNMDTSTTLHH.

Residues 1–20 (MLLNVLRICIIVCLVNDGAG) form the signal peptide. N-linked (GlcNAc...) asparagine glycosylation is found at N103, N112, and N154. 4 disulfides stabilise this stretch: C169/C215, C183/C229, C193/C245, and C197/C247. Residues 169-253 (CKTLPFTQNI…ECTCEAHKSN (85 aa)) enclose the CTCK domain. The N-linked (GlcNAc...) asparagine glycan is linked to N228.

This sequence belongs to the DAN family. The long chain interacts with nodal/nr-1, bmp4 and wnt8, thereby inhibiting their function. The short chain interacts with nodal/nr-1 but not bmp4 or wnt8. As to expression, a component of the Nieuwkoop signaling center in the blastula. Expressed transiently in a broad anterior domain of the gastrula, including the anterior endoderm of the Spemann's organizer and more laterally the cardiac primordia. Expression is excluded from the prospective prechordal plate region and the ring of cells that give rise to the trunk-tail mesoderm.

It localises to the secreted. Inhibits wnt, nodal/nr-1 and bmp signaling in the embryo to promote head formation and anterior neural induction. Within the endoderm, acts as an essential mediator of nodal/nr-1-induced cardiogenesis in the overlying mesoderm. This is Cerberus from Xenopus laevis (African clawed frog).